The primary structure comprises 504 residues: Protein FMP42 (504 aa).

Residues Met1–Gln11 are Vacuolar-facing. The helical transmembrane segment at Val12 to Leu32 threads the bilayer. The Cytoplasmic segment spans residues Lys33 to Asn64. A helical membrane pass occupies residues Phe65–Leu85. The Vacuolar segment spans residues Asp86–Arg91. Residues Val92 to Lys112 traverse the membrane as a helical segment. Over His113–Asp119 the chain is Cytoplasmic. The chain crosses the membrane as a helical span at residues Pro120–Phe140. At Gln141–Ser150 the chain is on the vacuolar side. A helical transmembrane segment spans residues Gly151–Tyr171. The Cytoplasmic portion of the chain corresponds to Arg172–Arg186. Residues Phe187 to Pro207 form a helical membrane-spanning segment. Residues His208 to Pro302 are Vacuolar-facing. A phosphoserine mark is found at Ser238, Ser249, and Ser269. The helical transmembrane segment at Trp303–Ala323 threads the bilayer. The Cytoplasmic portion of the chain corresponds to Thr324–Ser344. Residues Ile345–Leu365 form a helical membrane-spanning segment. At Asp366–Gly385 the chain is on the vacuolar side. A helical transmembrane segment spans residues Val386–Val406. The Cytoplasmic portion of the chain corresponds to Tyr407 to Lys421. Residues Val422–Phe442 form a helical membrane-spanning segment. Topologically, residues Asn443–Phe462 are vacuolar. The chain crosses the membrane as a helical span at residues Pro463–Ile483. The Cytoplasmic portion of the chain corresponds to Arg484–Ile504.

The protein belongs to the SLC43A transporter (TC 2.A.1.44) family.

It is found in the vacuole membrane. The chain is Protein FMP42 (FMP42) from Saccharomyces cerevisiae (strain ATCC 204508 / S288c) (Baker's yeast).